A 316-amino-acid chain; its full sequence is Transaldolase (316 aa).

The Schiff-base intermediate with substrate role is filled by K132.

The protein belongs to the transaldolase family. Type 1 subfamily. As to quaternary structure, homodimer.

The protein localises to the cytoplasm. It carries out the reaction D-sedoheptulose 7-phosphate + D-glyceraldehyde 3-phosphate = D-erythrose 4-phosphate + beta-D-fructose 6-phosphate. The protein operates within carbohydrate degradation; pentose phosphate pathway; D-glyceraldehyde 3-phosphate and beta-D-fructose 6-phosphate from D-ribose 5-phosphate and D-xylulose 5-phosphate (non-oxidative stage): step 2/3. Its function is as follows. Transaldolase is important for the balance of metabolites in the pentose-phosphate pathway. In Aliivibrio salmonicida (strain LFI1238) (Vibrio salmonicida (strain LFI1238)), this protein is Transaldolase.